A 271-amino-acid chain; its full sequence is Pyrroline-5-carboxylate reductase (271 aa).

The protein belongs to the pyrroline-5-carboxylate reductase family.

Its subcellular location is the cytoplasm. The enzyme catalyses L-proline + NADP(+) = (S)-1-pyrroline-5-carboxylate + NADPH + 2 H(+). It catalyses the reaction L-proline + NAD(+) = (S)-1-pyrroline-5-carboxylate + NADH + 2 H(+). It functions in the pathway amino-acid biosynthesis; L-proline biosynthesis; L-proline from L-glutamate 5-semialdehyde: step 1/1. Functionally, catalyzes the reduction of 1-pyrroline-5-carboxylate (PCA) to L-proline. The sequence is that of Pyrroline-5-carboxylate reductase from Staphylococcus epidermidis (strain ATCC 35984 / DSM 28319 / BCRC 17069 / CCUG 31568 / BM 3577 / RP62A).